The following is a 755-amino-acid chain: Catalase-peroxidase (755 aa).

The segment at residues 93–241 (WHSAGTYRVF…LAAAHMGLIY (149 aa)) is a cross-link (tryptophyl-tyrosyl-methioninium (Trp-Tyr) (with M-267)). H94 acts as the Proton acceptor in catalysis. Residues 241 to 267 (YVNPEGPDGNPDPVAAARDIRVTFGRM) constitute a cross-link (tryptophyl-tyrosyl-methioninium (Tyr-Met) (with W-93)). Residue H282 coordinates heme b.

This sequence belongs to the peroxidase family. Peroxidase/catalase subfamily. In terms of assembly, homodimer or homotetramer. Requires heme b as cofactor. Formation of the three residue Trp-Tyr-Met cross-link is important for the catalase, but not the peroxidase activity of the enzyme.

The protein resides in the cytoplasm. It catalyses the reaction H2O2 + AH2 = A + 2 H2O. The enzyme catalyses 2 H2O2 = O2 + 2 H2O. Functionally, bifunctional enzyme with both catalase and broad-spectrum peroxidase activity. The sequence is that of Catalase-peroxidase from Podospora anserina (strain S / ATCC MYA-4624 / DSM 980 / FGSC 10383) (Pleurage anserina).